Reading from the N-terminus, the 556-residue chain is Formate--tetrahydrofolate ligase (556 aa).

65 to 72 (TPAGEGKS) is a binding site for ATP.

It belongs to the formate--tetrahydrofolate ligase family.

It catalyses the reaction (6S)-5,6,7,8-tetrahydrofolate + formate + ATP = (6R)-10-formyltetrahydrofolate + ADP + phosphate. Its pathway is one-carbon metabolism; tetrahydrofolate interconversion. The protein is Formate--tetrahydrofolate ligase of Streptococcus pneumoniae (strain 70585).